We begin with the raw amino-acid sequence, 323 residues long: Aldo-keto reductase family 1 member C23-like protein (323 aa).

20 to 24 (GFGTY) is an NADP(+) binding site. Lysine 31 serves as a coordination point for substrate. Aspartate 50 contacts NADP(+). The active-site Proton donor is the tyrosine 55. Histidine 117 contacts substrate. Residues 166-167 (SN), glutamine 190, 216-222 (YGALGTQ), and 270-280 (KSYNEKRIKEN) each bind NADP(+).

This sequence belongs to the aldo/keto reductase family. Monomer. Detected in endometrium surface epithelium (at protein level). Detected in endometrium.

The protein resides in the cytoplasm. In terms of biological role, NADP-dependent oxidoreductase involved in steroid metabolism. May act on various hydroxysteroids. This is Aldo-keto reductase family 1 member C23-like protein (PGFS) from Equus caballus (Horse).